The following is a 296-amino-acid chain: MTLNNVTMRQGTVGMQPQQQRWSIPADGRHLMVQKEPHQYSHRNRHSATPEDHCRRSWSSDSTDSVISSESGNTYYRVVLIGEQGVGKSTLANIFAGVHDSMDSDCEVLGEDTYERTLMVDGESATIILLDMWENKGENEWLHDHCMQVGDAYLIVYSITDRASFEKASELRIQLRRARQTEDIPIILVGNKSDLVRCREVSVSEGRACAVVFDCKFIETSAAVQHNVKELFEGIVRQVRLRRDSKEKNERRLAYQKRKESMPRKARRFWGKIVAKNNKNMAFKLKSKSCHDLSVL.

Disordered stretches follow at residues 1-20 (MTLN…PQQQ) and 37-68 (PHQY…SVIS). The segment covering 57–68 (SWSSDSTDSVIS) has biased composition (low complexity). Residues 82 to 89 (GEQGVGKS) and 191 to 194 (NKSD) contribute to the GTP site. The tract at residues 266–285 (ARRFWGKIVAKNNKNMAFKL) is calmodulin-binding.

The protein belongs to the small GTPase superfamily. RGK family. In terms of assembly, interacts with calmodulin in a Ca(2+)-dependent manner. Binds ROCK1. Post-translationally, phosphorylated on tyrosine residues. In terms of tissue distribution, most abundant in thymus, spleen, kidney, lung, and testis. Less abundant in heart, brain, liver and skeletal muscle.

It is found in the cell membrane. Could be a regulatory protein, possibly participating in receptor-mediated signal transduction at the plasma membrane. Has guanine nucleotide-binding activity but undetectable intrinsic GTPase activity. The chain is GTP-binding protein GEM (GEM) from Homo sapiens (Human).